The primary structure comprises 438 residues: Polycomb protein eed-B (438 aa).

Residues 1 to 70 (MSEASGRAAG…GRKGWGKGKW (70 aa)) are disordered. Residues 40 to 57 (SIESGTNTERPDTPTNAA) show a composition bias toward polar residues. WD repeat units follow at residues 88–131 (DHNQ…DIRL), 139–182 (DADE…CIKH), 185–225 (GHGN…LVAI), 231–270 (GHRD…MKTA), 301–338 (IHRN…DDIE), 356–396 (SQCD…PHKA), and 405–438 (KCAS…DRLR).

It belongs to the WD repeat ESC family. As to quaternary structure, component of the prc2/eed-ezh2 complex. Can interact with ezh2, hdac1 and taf9. Interacts with yy1.

It localises to the nucleus. Functionally, polycomb group (PcG) protein. Component of the prc2/eed-ezh2 complex, which methylates 'Lys-9' and 'Lys-27' of histone H3, leading to transcriptional repression of the affected target gene. May play a role in neural induction. The chain is Polycomb protein eed-B (eed-b) from Xenopus laevis (African clawed frog).